Here is a 163-residue protein sequence, read N- to C-terminus: Pheromone-binding protein (163 aa).

A signal peptide spans 1–21 (MLRKISLLLLPVFVAINLVHS). Intrachain disulfides connect C40/C75, C71/C129, and C118/C138.

The protein belongs to the PBP/GOBP family. Homodimer. Antenna.

Its function is as follows. This major soluble protein in olfactory sensilla of male moths might serve to solubilize the extremely hydrophobic pheromone molecules and to transport pheromone through the aqueous lymph to receptors located on olfactory cilia. The protein is Pheromone-binding protein of Antheraea polyphemus (Polyphemus moth).